The primary structure comprises 146 residues: D-aminoacyl-tRNA deacylase (146 aa).

Positions 137–138 (GP) match the Gly-cisPro motif, important for rejection of L-amino acids motif.

It belongs to the DTD family. As to quaternary structure, homodimer.

The protein resides in the cytoplasm. It carries out the reaction glycyl-tRNA(Ala) + H2O = tRNA(Ala) + glycine + H(+). It catalyses the reaction a D-aminoacyl-tRNA + H2O = a tRNA + a D-alpha-amino acid + H(+). Its function is as follows. An aminoacyl-tRNA editing enzyme that deacylates mischarged D-aminoacyl-tRNAs. Also deacylates mischarged glycyl-tRNA(Ala), protecting cells against glycine mischarging by AlaRS. Acts via tRNA-based rather than protein-based catalysis; rejects L-amino acids rather than detecting D-amino acids in the active site. By recycling D-aminoacyl-tRNA to D-amino acids and free tRNA molecules, this enzyme counteracts the toxicity associated with the formation of D-aminoacyl-tRNA entities in vivo and helps enforce protein L-homochirality. This is D-aminoacyl-tRNA deacylase from Bacillus cereus (strain Q1).